The primary structure comprises 647 residues: MLRVPLCTPLPLLALLQLLGAAHGIYNVTQRTFKLDYSRDRFLKDGQPFRYISGSIHYFRIPRFYWEDRLLKMKMAGLNAIQMYVPWNFHEPQPGQYEFSGDRDVEHFIQLAHELGLLVILRPGPYICAEWDMGGLPAWLLEKQSIVLRSSDPDYLVAVDKWLAVLLPKMKPLLYQNGGPIITVQVENEYGSYFACDYDYLRFLVHRFRYHLGNDVILFTTDGASEKMLKCGTLQDLYATVDFGTGNNITQAFLVQRKFEPKGPLINSEFYTGWLDHWGKPHSTVKTKTLATSLYNLLARGANVNLYMFIGGTNFAYWNGANTPYEPQPTSYDYDAPLSEAGDLTKKYFALREVIQMFKEVPEGPIPPSTPKFAYGKVALRKFKTVAEALGILCPNGPVKSLYPLTFTQVKQYFGYVLYRTTLPQDCSNPKPIFSSPFNGVRDRAYVSVDGVPQGILDRNLMTALNIRGKAGATLDILVENMGRVNYGRFINDFKGLISNMTINSTVLTNWTVFPLNTEAMVRNHLWGREASDEGHLDGRSTSNSSDLILPTFYVGNFSIPSGIPDLPQDTFIQFPGWSKGQVWINGFNLGRYWPTMGPQKTLFVPRNILTTSAPNNITVLELEFAPCSEGTPELCTVEFVDTPVIS.

The signal sequence occupies residues 1-24 (MLRVPLCTPLPLLALLQLLGAAHG). Residues 25–29 (IYNVT) constitute a propeptide that is removed on maturation. An N-linked (GlcNAc...) asparagine glycan is attached at Asn-27. Positions 84, 130, and 188 each coordinate substrate. The Proton donor role is filled by Glu-189. Cysteines 196 and 231 form a disulfide. A glycan (N-linked (GlcNAc...) asparagine) is linked at Asn-248. Glu-269 acts as the Nucleophile in catalysis. Tyr-334 contacts substrate. N-linked (GlcNAc...) asparagine glycosylation is found at Asn-500, Asn-504, Asn-510, Asn-544, Asn-557, and Asn-617. Cys-628 and Cys-636 are disulfide-bonded.

This sequence belongs to the glycosyl hydrolase 35 family. As to quaternary structure, homodimer. May form higher multimers.

The protein localises to the lysosome. The enzyme catalyses Hydrolysis of terminal non-reducing beta-D-galactose residues in beta-D-galactosides.. Functionally, cleaves beta-linked terminal galactosyl residues from gangliosides, glycoproteins, and glycosaminoglycans. The protein is Beta-galactosidase (Glb1) of Mus musculus (Mouse).